The chain runs to 46 residues: Escargot/snail protein homolog (46 aa).

3 C2H2-type zinc fingers span residues 1-4 (HIAH), 9-30 (CKCP…IRTH), and 36-46 (SVCQHCNRAFA).

Belongs to the snail C2H2-type zinc-finger protein family.

The protein localises to the nucleus. This is Escargot/snail protein homolog from Lithobius forficatus (Centipede).